A 122-amino-acid chain; its full sequence is Large ribosomal subunit protein uL14 (122 aa).

It belongs to the universal ribosomal protein uL14 family. As to quaternary structure, part of the 50S ribosomal subunit. Forms a cluster with proteins L3 and L19. In the 70S ribosome, L14 and L19 interact and together make contacts with the 16S rRNA in bridges B5 and B8.

Functionally, binds to 23S rRNA. Forms part of two intersubunit bridges in the 70S ribosome. The chain is Large ribosomal subunit protein uL14 from Nautilia profundicola (strain ATCC BAA-1463 / DSM 18972 / AmH).